Reading from the N-terminus, the 320-residue chain is Acetyl-coenzyme A carboxylase carboxyl transferase subunit alpha (320 aa).

In terms of domain architecture, CoA carboxyltransferase C-terminal spans Ala33–Ala294.

The protein belongs to the AccA family. Acetyl-CoA carboxylase is a heterohexamer composed of biotin carboxyl carrier protein (AccB), biotin carboxylase (AccC) and two subunits each of ACCase subunit alpha (AccA) and ACCase subunit beta (AccD).

Its subcellular location is the cytoplasm. The catalysed reaction is N(6)-carboxybiotinyl-L-lysyl-[protein] + acetyl-CoA = N(6)-biotinyl-L-lysyl-[protein] + malonyl-CoA. It participates in lipid metabolism; malonyl-CoA biosynthesis; malonyl-CoA from acetyl-CoA: step 1/1. In terms of biological role, component of the acetyl coenzyme A carboxylase (ACC) complex. First, biotin carboxylase catalyzes the carboxylation of biotin on its carrier protein (BCCP) and then the CO(2) group is transferred by the carboxyltransferase to acetyl-CoA to form malonyl-CoA. The polypeptide is Acetyl-coenzyme A carboxylase carboxyl transferase subunit alpha (Phenylobacterium zucineum (strain HLK1)).